The chain runs to 449 residues: Secretin receptor (449 aa).

A signal peptide spans 1–25 (MLSTMRPRLSLLLLRLLLLTKAAHT). Residues 26-141 (VGVPPRLCDV…NERRHAYLLK (116 aa)) lie on the Extracellular side of the membrane. Disulfide bonds link cysteine 46-cysteine 75, cysteine 66-cysteine 107, and cysteine 89-cysteine 123. N-linked (GlcNAc...) asparagine glycosylation is found at asparagine 72, asparagine 100, asparagine 106, and asparagine 128. A helical transmembrane segment spans residues 142 to 167 (LKVMYTVGYSSSLAMLLVALSILCSF). The Cytoplasmic portion of the chain corresponds to 168 to 174 (RRLHCTR). The chain crosses the membrane as a helical span at residues 175 to 195 (NYIHMHLFVSFILRALSNFIK). Residues 196-216 (DAVLFSSDDVTYCDAHKVGCK) lie on the Extracellular side of the membrane. Cysteine 215 and cysteine 285 are disulfide-bonded. A helical membrane pass occupies residues 217-239 (LVMIFFQYCIMANYAWLLVEGLY). The Cytoplasmic segment spans residues 240–254 (LHTLLAISFFSERKY). A helical membrane pass occupies residues 255 to 276 (LQAFVLLGWGSPAIFVALWAIT). The Extracellular segment spans residues 277–291 (RHFLENTGCWDINAN). Asparagine 291 carries an N-linked (GlcNAc...) asparagine glycan. The chain crosses the membrane as a helical span at residues 292–315 (ASVWWVIRGPVILSILINFIFFIN). Over 316–340 (ILRILMRKLRTQETRGSETNHYKRL) the chain is Cytoplasmic. Residues 341-356 (AKSTLLLIPLFGIHYI) form a helical membrane-spanning segment. The Extracellular segment spans residues 357–367 (VFAFSPEDAME). Residues 368-391 (VQLFFELALGSFQGLVVAVLYCFL) form a helical membrane-spanning segment. Over 392–449 (NGEVQLEVQKKWRQWHLQEFPLRPVAFNNSFSNATNGPTHSTKASTEQSRSIPRASII) the chain is Cytoplasmic. Residues 425–442 (ATNGPTHSTKASTEQSRS) show a composition bias toward polar residues. A disordered region spans residues 425 to 449 (ATNGPTHSTKASTEQSRSIPRASII).

The protein belongs to the G-protein coupled receptor 2 family. In terms of processing, phosphorylated on Ser and Thr residues at the cytoplasmic C-terminus by G protein-coupled receptor kinases (GRKs). N-glycosylated. As to expression, in the brain, expressed in the central amygdala, hippocampus, area postrema, nucleus of the tractus solitary and cerebellum.

The protein localises to the cell membrane. It localises to the basolateral cell membrane. Its function is as follows. G protein-coupled receptor activated by secretin (SCT), which is involved in different processes such as regulation of the pH of the duodenal content, food intake and water homeostasis. Ligand binding causes a conformation change that triggers signaling via guanine nucleotide-binding proteins (G proteins) and activates cAMP-dependent pathway. Upon binding to secretin, regulates the pH of the duodenum by (1) inhibiting the secretion of gastric acid from the parietal cells of the stomach and (2) stimulating the production of bicarbonate (NaHCO(3)) from the ductal cells of the pancreas. In addition to regulating the pH of the duodenal content, plays a central role in diet induced thermogenesis: acts as a non-sympathetic brown fat (BAT) activator mediating prandial thermogenesis, which consequentially induces satiation. Mechanistically, secretin released by the gut after a meal binds to secretin receptor (SCTR) in brown adipocytes, activating brown fat thermogenesis by stimulating lipolysis, which is sensed in the brain and promotes satiation. Also able to stimulate lipolysis in white adipocytes. Also plays an important role in cellular osmoregulation by regulating renal water reabsorption. Also plays a role in the central nervous system: required for synaptic plasticity. The chain is Secretin receptor from Rattus norvegicus (Rat).